Here is a 189-residue protein sequence, read N- to C-terminus: Putative dihydrofolate reductase (189 aa).

A DHFR domain is found at 3-185 (KMNLIVAMDA…LKFEFCKWKV (183 aa)). Residues A9 and 15–21 (GIGKNGV) each bind NADP(+). A substrate-binding site is contributed by 29–34 (DMQYFA). Position 53 to 55 (53 to 55 (RKC)) interacts with NADP(+). Residue R69 coordinates substrate. Residues 75 to 77 (SRQ) and 115 to 122 (GGAEIYDL) contribute to the NADP(+) site.

It belongs to the dihydrofolate reductase family.

The enzyme catalyses (6S)-5,6,7,8-tetrahydrofolate + NADP(+) = 7,8-dihydrofolate + NADPH + H(+). The protein operates within cofactor biosynthesis; tetrahydrofolate biosynthesis; 5,6,7,8-tetrahydrofolate from 7,8-dihydrofolate: step 1/1. Its function is as follows. Key enzyme in folate metabolism. Catalyzes an essential reaction for de novo glycine and purine synthesis, and for DNA precursor synthesis. This Caenorhabditis elegans protein is Putative dihydrofolate reductase (dhfr-1).